Consider the following 285-residue polypeptide: Homeobox protein Hox-A13b (285 aa).

The homeobox DNA-binding region spans Gly-219–Val-278.

Belongs to the Abd-B homeobox family.

The protein localises to the nucleus. Its function is as follows. Sequence-specific transcription factor which is part of a developmental regulatory system that provides cells with specific positional identities on the anterior-posterior axis. This is Homeobox protein Hox-A13b (hoxa13b) from Takifugu rubripes (Japanese pufferfish).